A 154-amino-acid polypeptide reads, in one-letter code: Large-conductance mechanosensitive channel (154 aa).

3 helical membrane-spanning segments follow: residues 16 to 36 (VLGL…ISSV), 39 to 59 (DLLM…GFFI), and 89 to 109 (GQFL…FMIM).

This sequence belongs to the MscL family. Homopentamer.

It localises to the cell inner membrane. Channel that opens in response to stretch forces in the membrane lipid bilayer. May participate in the regulation of osmotic pressure changes within the cell. The chain is Large-conductance mechanosensitive channel from Zymomonas mobilis subsp. mobilis (strain ATCC 31821 / ZM4 / CP4).